The primary structure comprises 279 residues: DegV domain-containing protein SP_1112 (279 aa).

In terms of domain architecture, DegV spans 4–277; that stretch reads IKIVTDSSVT…ENAWAILIRY (274 aa). Hexadecanoate-binding residues include T62 and S94.

Its function is as follows. May bind long-chain fatty acids, such as palmitate, and may play a role in lipid transport or fatty acid metabolism. This chain is DegV domain-containing protein SP_1112, found in Streptococcus pneumoniae serotype 4 (strain ATCC BAA-334 / TIGR4).